A 279-amino-acid chain; its full sequence is Diaminopimelate epimerase (279 aa).

Asn13 and Asn66 together coordinate substrate. The active-site Proton donor is Cys75. Residues 76–77 (GN), Asn164, Asn197, and 215–216 (ER) contribute to the substrate site. Catalysis depends on Cys224, which acts as the Proton acceptor. 225–226 (GT) lines the substrate pocket.

Belongs to the diaminopimelate epimerase family. In terms of assembly, homodimer.

Its subcellular location is the cytoplasm. It catalyses the reaction (2S,6S)-2,6-diaminopimelate = meso-2,6-diaminopimelate. It functions in the pathway amino-acid biosynthesis; L-lysine biosynthesis via DAP pathway; DL-2,6-diaminopimelate from LL-2,6-diaminopimelate: step 1/1. Functionally, catalyzes the stereoinversion of LL-2,6-diaminopimelate (L,L-DAP) to meso-diaminopimelate (meso-DAP), a precursor of L-lysine and an essential component of the bacterial peptidoglycan. The polypeptide is Diaminopimelate epimerase (Brachyspira hyodysenteriae (strain ATCC 49526 / WA1)).